The primary structure comprises 251 residues: HTH-type transcriptional regulator UlaR (251 aa).

In terms of domain architecture, HTH deoR-type spans 3 to 58 (EAQRHQILLDMLAQLGFVTVENVIERLGISPATARRDINKLDESGKLKKVRNGAEA). Positions 20 to 39 (VTVENVIERLGISPATARRD) form a DNA-binding region, H-T-H motif.

The protein resides in the cytoplasm. Its function is as follows. Represses ulaG and the ulaABCDEF operon. The polypeptide is HTH-type transcriptional regulator UlaR (Salmonella agona (strain SL483)).